The primary structure comprises 37 residues: Dolichyl-diphosphooligosaccharide--protein glycosyltransferase subunit 4 (37 aa).

Residues 1–4 (MITD) lie on the Lumenal side of the membrane. A helical membrane pass occupies residues 5–25 (VQLAIFANMLGVSLFLLVVLY). Topologically, residues 26–37 (HYVAVNNPKKQE) are cytoplasmic.

Belongs to the OST4 family. In terms of assembly, component of the oligosaccharyltransferase (OST) complex. OST exists in two different complex forms which contain common core subunits RPN1, RPN2, OST48, OST4, DAD1 and TMEM258, either STT3A or STT3B as catalytic subunits, and form-specific accessory subunits. STT3A complex assembly occurs through the formation of 3 subcomplexes. Subcomplex 1 contains RPN1 and TMEM258, subcomplex 2 contains the STT3A-specific subunits STT3A, DC2/OSTC, and KCP2 as well as the core subunit OST4, and subcomplex 3 contains RPN2, DAD1, and OST48. The STT3A complex can form stable complexes with the Sec61 complex or with both the Sec61 and TRAP complexes.

It localises to the endoplasmic reticulum. The protein resides in the endoplasmic reticulum membrane. Its pathway is protein modification; protein glycosylation. Its function is as follows. Subunit of the oligosaccharyl transferase (OST) complex that catalyzes the initial transfer of a defined glycan (Glc(3)Man(9)GlcNAc(2) in eukaryotes) from the lipid carrier dolichol-pyrophosphate to an asparagine residue within an Asn-X-Ser/Thr consensus motif in nascent polypeptide chains, the first step in protein N-glycosylation. N-glycosylation occurs cotranslationally and the complex associates with the Sec61 complex at the channel-forming translocon complex that mediates protein translocation across the endoplasmic reticulum (ER). All subunits are required for a maximal enzyme activity. Specifically involved in maintaining stability of STT3A-containing OST complexes. This is Dolichyl-diphosphooligosaccharide--protein glycosyltransferase subunit 4 from Homo sapiens (Human).